Consider the following 407-residue polypeptide: 1-deoxy-D-xylulose 5-phosphate reductoisomerase (407 aa).

The NADPH site is built by Thr25, Gly26, Ser27, Ile28, Asn53, and Asn136. Lys137 is a 1-deoxy-D-xylulose 5-phosphate binding site. NADPH is bound at residue Glu138. A Mn(2+)-binding site is contributed by Asp162. Positions 163, 164, 188, and 211 each coordinate 1-deoxy-D-xylulose 5-phosphate. Glu164 contacts Mn(2+). Position 217 (Gly217) interacts with NADPH. 1-deoxy-D-xylulose 5-phosphate-binding residues include Ser224, Asn229, Lys230, and Glu233. Residue Glu233 coordinates Mn(2+).

It belongs to the DXR family. It depends on Mg(2+) as a cofactor. Mn(2+) is required as a cofactor.

It carries out the reaction 2-C-methyl-D-erythritol 4-phosphate + NADP(+) = 1-deoxy-D-xylulose 5-phosphate + NADPH + H(+). It functions in the pathway isoprenoid biosynthesis; isopentenyl diphosphate biosynthesis via DXP pathway; isopentenyl diphosphate from 1-deoxy-D-xylulose 5-phosphate: step 1/6. Its function is as follows. Catalyzes the NADPH-dependent rearrangement and reduction of 1-deoxy-D-xylulose-5-phosphate (DXP) to 2-C-methyl-D-erythritol 4-phosphate (MEP). This is 1-deoxy-D-xylulose 5-phosphate reductoisomerase from Rhodopseudomonas palustris (strain HaA2).